Reading from the N-terminus, the 437-residue chain is Enolase 1 (437 aa).

K60 is covalently cross-linked (Glycyl lysine isopeptide (Lys-Gly) (interchain with G-Cter in ubiquitin)). S119 and S138 each carry phosphoserine. Substrate is bound by residues H160 and E169. S188 bears the Phosphoserine mark. E212 acts as the Proton donor in catalysis. K243 is covalently cross-linked (Glycyl lysine isopeptide (Lys-Gly) (interchain with G-Cter in ubiquitin)). Positions 247 and 296 each coordinate Mg(2+). E296 lines the substrate pocket. Residue T313 is modified to Phosphothreonine. D321 serves as a coordination point for substrate. A Mg(2+)-binding site is contributed by D321. T324 carries the phosphothreonine modification. The Proton acceptor role is filled by K346. K358 participates in a covalent cross-link: Glycyl lysine isopeptide (Lys-Gly) (interchain with G-Cter in ubiquitin). Substrate-binding positions include 373–376 (SHRS) and K397.

Belongs to the enolase family. As to quaternary structure, homodimer. It depends on Mg(2+) as a cofactor.

The protein localises to the cytoplasm. The catalysed reaction is (2R)-2-phosphoglycerate = phosphoenolpyruvate + H2O. Its pathway is carbohydrate degradation; glycolysis; pyruvate from D-glyceraldehyde 3-phosphate: step 4/5. This Saccharomyces cerevisiae (strain ATCC 204508 / S288c) (Baker's yeast) protein is Enolase 1 (ENO1).